We begin with the raw amino-acid sequence, 333 residues long: Lipoyl synthase (333 aa).

A disordered region spans residues 1-29; the sequence is MTDSASGASAVANIATPSNEPYDATRKQK. [4Fe-4S] cluster contacts are provided by cysteine 80, cysteine 85, cysteine 91, cysteine 106, cysteine 110, cysteine 113, and serine 320. A Radical SAM core domain is found at 91-309; sequence CFGKGTATFM…EEKAYEMGFT (219 aa).

This sequence belongs to the radical SAM superfamily. Lipoyl synthase family. [4Fe-4S] cluster is required as a cofactor.

It is found in the cytoplasm. The enzyme catalyses [[Fe-S] cluster scaffold protein carrying a second [4Fe-4S](2+) cluster] + N(6)-octanoyl-L-lysyl-[protein] + 2 oxidized [2Fe-2S]-[ferredoxin] + 2 S-adenosyl-L-methionine + 4 H(+) = [[Fe-S] cluster scaffold protein] + N(6)-[(R)-dihydrolipoyl]-L-lysyl-[protein] + 4 Fe(3+) + 2 hydrogen sulfide + 2 5'-deoxyadenosine + 2 L-methionine + 2 reduced [2Fe-2S]-[ferredoxin]. It participates in protein modification; protein lipoylation via endogenous pathway; protein N(6)-(lipoyl)lysine from octanoyl-[acyl-carrier-protein]: step 2/2. Its function is as follows. Catalyzes the radical-mediated insertion of two sulfur atoms into the C-6 and C-8 positions of the octanoyl moiety bound to the lipoyl domains of lipoate-dependent enzymes, thereby converting the octanoylated domains into lipoylated derivatives. This is Lipoyl synthase from Ralstonia nicotianae (strain ATCC BAA-1114 / GMI1000) (Ralstonia solanacearum).